The chain runs to 140 residues: Large ribosomal subunit protein uL11 (140 aa).

Belongs to the universal ribosomal protein uL11 family. Part of the ribosomal stalk of the 50S ribosomal subunit. Interacts with L10 and the large rRNA to form the base of the stalk. L10 forms an elongated spine to which L12 dimers bind in a sequential fashion forming a multimeric L10(L12)X complex. One or more lysine residues are methylated.

Forms part of the ribosomal stalk which helps the ribosome interact with GTP-bound translation factors. The sequence is that of Large ribosomal subunit protein uL11 from Geobacter sp. (strain M21).